Here is a 603-residue protein sequence, read N- to C-terminus: Elongation factor 4 (603 aa).

The 183-residue stretch at 7–189 (SRIRNFSIIA…SIVHLVPPPQ (183 aa)) folds into the tr-type G domain. GTP contacts are provided by residues 19 to 24 (DHGKST) and 136 to 139 (NKID).

Belongs to the TRAFAC class translation factor GTPase superfamily. Classic translation factor GTPase family. LepA subfamily.

The protein localises to the cell inner membrane. It catalyses the reaction GTP + H2O = GDP + phosphate + H(+). Its function is as follows. Required for accurate and efficient protein synthesis under certain stress conditions. May act as a fidelity factor of the translation reaction, by catalyzing a one-codon backward translocation of tRNAs on improperly translocated ribosomes. Back-translocation proceeds from a post-translocation (POST) complex to a pre-translocation (PRE) complex, thus giving elongation factor G a second chance to translocate the tRNAs correctly. Binds to ribosomes in a GTP-dependent manner. This chain is Elongation factor 4, found in Rippkaea orientalis (strain PCC 8801 / RF-1) (Cyanothece sp. (strain PCC 8801)).